A 529-amino-acid polypeptide reads, in one-letter code: Putative E3 ubiquitin-protein ligase ARI4 (529 aa).

The span at 1-22 (MDDEYMSLEEEEDNCYPSEFDD) shows a compositional bias: acidic residues. The disordered stretch occupies residues 1-23 (MDDEYMSLEEEEDNCYPSEFDDH). Residues 115-327 (KTMKCDICME…IAGHSCGRYK (213 aa)) are TRIAD supradomain. C119, C122, C137, H139, C142, C145, C164, C169, C206, C212, C230, C232, C237, C240, H245, C250, C277, and C280 together coordinate Zn(2+). The RING-type 1 zinc finger occupies 119-169 (CDICMEEDLSKYAMTRMECGHRFCNDCWKEHFTVRINEGEGKRIRCMAYKC). Residues 186–250 (EKFDRFLIES…LSESHSPCSC (65 aa)) form an IBR-type zinc finger. The RING-type 2; atypical zinc-finger motif lies at 277 to 305 (CPKCSKPIQKRDGCNHMTCKCGQHFCWLC). C290 is a catalytic residue. The Zn(2+) site is built by C295, C297, C302, C305, H313, and C323.

This sequence belongs to the RBR family. Ariadne subfamily. Zn(2+) serves as cofactor.

It carries out the reaction [E2 ubiquitin-conjugating enzyme]-S-ubiquitinyl-L-cysteine + [acceptor protein]-L-lysine = [E2 ubiquitin-conjugating enzyme]-L-cysteine + [acceptor protein]-N(6)-ubiquitinyl-L-lysine.. The protein operates within protein modification; protein ubiquitination. Its function is as follows. Might act as an E3 ubiquitin-protein ligase, or as part of E3 complex, which accepts ubiquitin from specific E2 ubiquitin-conjugating enzymes and then transfers it to substrates. The chain is Putative E3 ubiquitin-protein ligase ARI4 (ARI4) from Arabidopsis thaliana (Mouse-ear cress).